The sequence spans 574 residues: Membrane protein insertase YidC (574 aa).

Residues 6 to 26 traverse the membrane as a helical segment; sequence VFLIFAWLMVAALLWMEWGKE. A disordered region spans residues 65-85; it reads QAGAPGKVPATSTTTATPAAA. 5 helical membrane passes run 350 to 370, 376 to 396, 447 to 467, 491 to 511, and 525 to 545; these read VIDY…FWVL, FLHN…LVLY, GGCL…WVLV, FILP…TPTP, and PLVF…YWVV.

This sequence belongs to the OXA1/ALB3/YidC family. Type 1 subfamily. In terms of assembly, interacts with the Sec translocase complex via SecD. Specifically interacts with transmembrane segments of nascent integral membrane proteins during membrane integration.

The protein resides in the cell inner membrane. Functionally, required for the insertion and/or proper folding and/or complex formation of integral membrane proteins into the membrane. Involved in integration of membrane proteins that insert both dependently and independently of the Sec translocase complex, as well as at least some lipoproteins. Aids folding of multispanning membrane proteins. The sequence is that of Membrane protein insertase YidC from Xanthomonas oryzae pv. oryzae (strain PXO99A).